Here is an 85-residue protein sequence, read N- to C-terminus: Protein RnfH (85 aa).

Belongs to the UPF0125 (RnfH) family.

This chain is Protein RnfH, found in Cereibacter sphaeroides (strain ATCC 17029 / ATH 2.4.9) (Rhodobacter sphaeroides).